The chain runs to 275 residues: Probable siderophore transport system ATP-binding protein YusV (275 aa).

Positions 6–242 (ISTETLSLGY…DLVQNVFSMN (237 aa)) constitute an ABC transporter domain. 38–45 (GSNGCGKS) lines the ATP pocket.

The protein belongs to the ABC transporter superfamily. In terms of assembly, the iron-hydroxamate siderophore complex is composed of one ATP-binding protein (YusV), two transmembrane proteins (YfiZ and YfhA) and a solute-binding protein (YfiY); the catechoplate siderophore complex is composed of one ATP-binding protein (YusV), two transmembrane proteins (FeuB and FeuC) and a solute-binding protein (FeuA).

Its subcellular location is the cell membrane. Its function is as follows. Provides the ATPase subunit for at least 2 ABC transporter complexes; YfiYZ/YfhA/YusV involved in import of the iron-hydroxamate siderophores schizokinen, arthrobactin and corprogen, and FeuABC/YusV involved in import of the catecholate siderophores bacillibactin and enterobactin. Probably responsible for energy coupling to the transport system. The chain is Probable siderophore transport system ATP-binding protein YusV (yusV) from Bacillus subtilis (strain 168).